Reading from the N-terminus, the 450-residue chain is UDP-N-acetylmuramoylalanine--D-glutamate ligase (450 aa).

119–125 (GSNGKTT) contacts ATP.

It belongs to the MurCDEF family.

It localises to the cytoplasm. It catalyses the reaction UDP-N-acetyl-alpha-D-muramoyl-L-alanine + D-glutamate + ATP = UDP-N-acetyl-alpha-D-muramoyl-L-alanyl-D-glutamate + ADP + phosphate + H(+). Its pathway is cell wall biogenesis; peptidoglycan biosynthesis. In terms of biological role, cell wall formation. Catalyzes the addition of glutamate to the nucleotide precursor UDP-N-acetylmuramoyl-L-alanine (UMA). This is UDP-N-acetylmuramoylalanine--D-glutamate ligase from Streptococcus gordonii (strain Challis / ATCC 35105 / BCRC 15272 / CH1 / DL1 / V288).